A 625-amino-acid chain; its full sequence is Threonine--tRNA ligase (625 aa).

The interval 1 to 149 (MRVLLIHAKR…RNYEAKTTAR (149 aa)) is editing domain. Catalytic regions lie at residues 197 to 494 (NPVN…PYIP) and 198 to 494 (PVNK…PYIP). 3 residues coordinate Zn(2+): C291, H342, and H463.

It belongs to the class-II aminoacyl-tRNA synthetase family. Homodimer. The cofactor is Zn(2+).

The protein localises to the cytoplasm. The enzyme catalyses tRNA(Thr) + L-threonine + ATP = L-threonyl-tRNA(Thr) + AMP + diphosphate + H(+). Functionally, catalyzes the attachment of threonine to tRNA(Thr) in a two-step reaction: L-threonine is first activated by ATP to form Thr-AMP and then transferred to the acceptor end of tRNA(Thr). Also edits incorrectly charged L-seryl-tRNA(Thr). In Hyperthermus butylicus (strain DSM 5456 / JCM 9403 / PLM1-5), this protein is Threonine--tRNA ligase.